A 432-amino-acid chain; its full sequence is Queuine tRNA-ribosyltransferase accessory subunit 2 (432 aa).

Residues cysteine 329, cysteine 331, cysteine 334, and histidine 360 each coordinate Zn(2+). The segment at 390–432 (GQKSLPPYEPPKEEKLPMPAAQKAELMEPMEDLGEKQNKKQRA) is disordered. The span at 422-432 (LGEKQNKKQRA) shows a compositional bias: basic and acidic residues.

It belongs to the queuine tRNA-ribosyltransferase family. QTRT2 subfamily. As to quaternary structure, heterodimer of a catalytic subunit and an accessory subunit. It depends on Zn(2+) as a cofactor.

The protein localises to the cytoplasm. Functionally, non-catalytic subunit of the queuine tRNA-ribosyltransferase (TGT) that catalyzes the base-exchange of a guanine (G) residue with queuine (Q) at position 34 (anticodon wobble position) in tRNAs with GU(N) anticodons (tRNA-Asp, -Asn, -His and -Tyr), resulting in the hypermodified nucleoside queuosine (7-(((4,5-cis-dihydroxy-2-cyclopenten-1-yl)amino)methyl)-7-deazaguanosine). In Anopheles gambiae (African malaria mosquito), this protein is Queuine tRNA-ribosyltransferase accessory subunit 2.